The following is a 66-amino-acid chain: Large ribosomal subunit protein uL30 (66 aa).

This sequence belongs to the universal ribosomal protein uL30 family. In terms of assembly, part of the 50S ribosomal subunit.

The chain is Large ribosomal subunit protein uL30 from Brucella anthropi (strain ATCC 49188 / DSM 6882 / CCUG 24695 / JCM 21032 / LMG 3331 / NBRC 15819 / NCTC 12168 / Alc 37) (Ochrobactrum anthropi).